We begin with the raw amino-acid sequence, 184 residues long: Ethylene-responsive transcription factor ERF122 (184 aa).

Residues 120–177 constitute a DNA-binding region (AP2/ERF); that stretch reads KYKGVRKKPSGKWAAEIWDPRSKSRRWLGTFLTAEMAAQSYNDAAAEYRARRGKTNGE.

The protein belongs to the AP2/ERF transcription factor family. ERF subfamily.

It is found in the nucleus. Its function is as follows. Probably acts as a transcriptional activator. Binds to the GCC-box pathogenesis-related promoter element. May be involved in the regulation of gene expression by stress factors and by components of stress signal transduction pathways. The polypeptide is Ethylene-responsive transcription factor ERF122 (ERF122) (Arabidopsis thaliana (Mouse-ear cress)).